A 273-amino-acid polypeptide reads, in one-letter code: DNA repair protein RecO (273 aa).

The segment at 249-273 (GRSLTEEPELKAEQTEAEKESQRPR) is disordered. Over residues 252 to 273 (LTEEPELKAEQTEAEKESQRPR) the composition is skewed to basic and acidic residues.

Belongs to the RecO family.

Functionally, involved in DNA repair and RecF pathway recombination. The protein is DNA repair protein RecO of Heliobacterium modesticaldum (strain ATCC 51547 / Ice1).